A 475-amino-acid polypeptide reads, in one-letter code: MEPLAPMRLYTLSKRHFVLVFVVFFICFGLTIFVGIRGPKVIQTSAANFSLNNSKKLKPIQILSNPLSTYNQQLWLTCVVELDQSKETSIKTSFPMTVKVDGVAQDGTTMYIHNKVHNRTRTLTCAGKCAEIIVAHLGYLNYTQYTVIVGFEHLKLPIKGMNFTWKTYNPAFSRLEIWFRFFFVVLTFIVTCLFAHSLRKFSMRDWGIEQKWMSVLLPLLLLYNDPFFPLSFLVNSWLPGMLDDLFQSMFLCALLLFWLCVYHGIRVQGERKCLTFYLPKFFIVGLLWLASVTLGIWQTVNELHDPMYQYRVDTGNFQGMKVFFMVVAAVYILYLLFLIVRACSELRHMPYVDLRLKFLTALTFVVLVISIAILYLRFGAQVLQDNFVAELSTHYQNSAEFLSFYGLLNFYLYTLAFVYSPSKNALYESQLKDNPAFSMLNDSDDDVIYGSDYEEMPLQNGQAIRAKYKEESDSD.

Helical transmembrane passes span 16 to 36 (HFVL…FVGI), 131 to 151 (EIIV…IVGF), 175 to 195 (LEIW…CLFA), 214 to 234 (SVLL…SFLV), 245 to 265 (LFQS…YHGI), 276 to 296 (FYLP…TLGI), 320 to 340 (MKVF…FLIV), 356 to 376 (LKFL…ILYL), and 401 to 421 (FLSF…VYSP). Ser443 bears the Phosphoserine mark.

It belongs to the TMEM181 family. Interacts with cytolethal distending toxin.

It is found in the membrane. In terms of biological role, mediates action of cytolethal distending toxins (CDT), which are secreted by many pathogenic bacteria. Expression level of TMEM181 is rate-limiting for intoxication. This is Transmembrane protein 181 (TMEM181) from Homo sapiens (Human).